The sequence spans 66 residues: UPF0370 protein YpfN (66 aa).

The helical transmembrane segment at Leu-4–Ile-24 threads the bilayer. Positions Lys-39 to Lys-66 are disordered. Over residues Leu-42–Lys-51 the composition is skewed to basic and acidic residues.

The protein belongs to the UPF0370 family.

The protein resides in the cell membrane. This Salmonella arizonae (strain ATCC BAA-731 / CDC346-86 / RSK2980) protein is UPF0370 protein YpfN.